We begin with the raw amino-acid sequence, 442 residues long: Trigger factor (442 aa).

Residues 163–248 (YDRVTINYCI…IIKIEKKQEL (86 aa)) enclose the PPIase FKBP-type domain.

This sequence belongs to the FKBP-type PPIase family. Tig subfamily.

It localises to the cytoplasm. It catalyses the reaction [protein]-peptidylproline (omega=180) = [protein]-peptidylproline (omega=0). Its function is as follows. Involved in protein export. Acts as a chaperone by maintaining the newly synthesized protein in an open conformation. Functions as a peptidyl-prolyl cis-trans isomerase. The sequence is that of Trigger factor from Buchnera aphidicola subsp. Acyrthosiphon pisum (strain 5A).